A 482-amino-acid polypeptide reads, in one-letter code: Nuclear transcription factor Y subunit nfya-1 (482 aa).

A disordered region spans residues 1–160 (MNGASRGDVQ…NGSYIQYNEP (160 aa)). Polar residues predominate over residues 72-93 (SSPNVQTQCHQPPVVRSQTHQA). Low complexity predominate over residues 94–110 (SVSQTTPTQTTPSQYTP). Composition is skewed to polar residues over residues 126–135 (HVTPSQQQRI) and 144–160 (VSQSQPQNGSYIQYNEP). Positions 306-329 (LVNPKQFNRIMRRREMRQQLEASG) match the Subunit association domain (SAD) motif. Positions 336 to 361 (QKYLHESRHLHALKRKRGLDGRFDNT) form a DNA-binding region, NFYA/HAP2-type. The disordered stretch occupies residues 344–414 (HLHALKRKRG…QPKGGIVNSS (71 aa)). The segment covering 353–362 (GLDGRFDNTK) has biased composition (basic and acidic residues). The segment covering 363–375 (TAESSSMVSSTTS) has biased composition (low complexity).

The protein belongs to the NFYA/HAP2 subunit family. Forms a heterotrimeric transcription factor complex (nfya-1-NF-Y complex) composed of nfya-1, nfyb-1 and nfyc-1, which binds to 5'-CCAAT-3' box motif in the promoters of its target genes. Interacts with the nfyb-1 and nfyc-1 dimer; the interaction is required for subsequent binding to the 5'-CCAAT-3' box motif in DNA. Does not interact with either nfyb-1 or nfyc-1 in their monomeric form. Interacts with mes-3. In terms of tissue distribution, expressed in certain parts of the gonads with high expression in fertilized oocytes in the uterus and mature oocytes from the distal to the proximal arm of the gonad, but weak expression in the syncytial ovaries and immature oocytes at the beginning of the proximal arm of the gonad. Highly expressed in the head ganglia neurons and the developing hermaphrodite vulva and male tail. Weakly expressed in most somatic cells. Not expressed in the intestine, the hypodermis, body wall muscle surrounding the pseudocoelomic space, secretory cells in the pharyngeal terminal bulb wall, in the small ganglia surrounding the pharynx and in the neurons running anteriorly to the sensory organs in the head.

It localises to the nucleus. Component of the sequence-specific heterotrimeric transcription factor (nfya-1-NF-Y) which specifically recognizes a 5'-CCAAT-3' box motif found in the promoters of its target genes to regulate their expression and control cellular identity in particular tissue types. In association with the components in the nfya-1-NF-Y complex, represses the expression of the T-box transcription factor tbx-2 throughout larval development, which most likely restricts its expression to certain tissues. May act to repress txb-2 expression in conjunction with tbx-2 itself, which has an autoregulatory role. With the components in this complex, negatively regulates the expression of the homeobox protein egl-5 to spatially restrict its expression in tissues such as the head. May regulate egl-5 expression in association with the mes-2-mes-3-mes-6 complex. In Caenorhabditis elegans, this protein is Nuclear transcription factor Y subunit nfya-1.